The following is a 545-amino-acid chain: Hydroxylamine reductase (545 aa).

Residues C3, C6, C15, and C21 each contribute to the [4Fe-4S] cluster site. The hybrid [4Fe-2O-2S] cluster site is built by H241, E265, C309, C396, C424, C449, E483, and K485. Residue C396 is modified to Cysteine persulfide.

It belongs to the HCP family. [4Fe-4S] cluster is required as a cofactor. It depends on hybrid [4Fe-2O-2S] cluster as a cofactor.

The protein localises to the cytoplasm. It catalyses the reaction A + NH4(+) + H2O = hydroxylamine + AH2 + H(+). Catalyzes the reduction of hydroxylamine to form NH(3) and H(2)O. The sequence is that of Hydroxylamine reductase from Zymomonas mobilis subsp. mobilis (strain ATCC 31821 / ZM4 / CP4).